The chain runs to 689 residues: Glycine--tRNA ligase beta subunit (689 aa).

Belongs to the class-II aminoacyl-tRNA synthetase family. As to quaternary structure, tetramer of two alpha and two beta subunits.

Its subcellular location is the cytoplasm. The catalysed reaction is tRNA(Gly) + glycine + ATP = glycyl-tRNA(Gly) + AMP + diphosphate. The protein is Glycine--tRNA ligase beta subunit of Actinobacillus pleuropneumoniae serotype 5b (strain L20).